An 853-amino-acid chain; its full sequence is DNA mismatch repair protein MutS (853 aa).

613–620 (GPNMGGKS) contributes to the ATP binding site.

It belongs to the DNA mismatch repair MutS family.

In terms of biological role, this protein is involved in the repair of mismatches in DNA. It is possible that it carries out the mismatch recognition step. This protein has a weak ATPase activity. The protein is DNA mismatch repair protein MutS of Vibrio atlanticus (strain LGP32) (Vibrio splendidus (strain Mel32)).